The sequence spans 401 residues: Phosphoglycerate kinase (401 aa).

Substrate-binding positions include Asp-24–Asn-26, Arg-40, His-63–Arg-66, Arg-122, and Arg-155. ATP is bound by residues Lys-206, Gly-297, Glu-328, and Gly-357 to Ser-360.

This sequence belongs to the phosphoglycerate kinase family. As to quaternary structure, monomer.

The protein localises to the cytoplasm. It catalyses the reaction (2R)-3-phosphoglycerate + ATP = (2R)-3-phospho-glyceroyl phosphate + ADP. It participates in carbohydrate degradation; glycolysis; pyruvate from D-glyceraldehyde 3-phosphate: step 2/5. This is Phosphoglycerate kinase from Acaryochloris marina (strain MBIC 11017).